Here is a 284-residue protein sequence, read N- to C-terminus: 2-dehydro-3-deoxyphosphooctonate aldolase (284 aa).

The protein belongs to the KdsA family.

The protein localises to the cytoplasm. The enzyme catalyses D-arabinose 5-phosphate + phosphoenolpyruvate + H2O = 3-deoxy-alpha-D-manno-2-octulosonate-8-phosphate + phosphate. Its pathway is carbohydrate biosynthesis; 3-deoxy-D-manno-octulosonate biosynthesis; 3-deoxy-D-manno-octulosonate from D-ribulose 5-phosphate: step 2/3. The protein operates within bacterial outer membrane biogenesis; lipopolysaccharide biosynthesis. In Proteus mirabilis (strain HI4320), this protein is 2-dehydro-3-deoxyphosphooctonate aldolase.